Consider the following 265-residue polypeptide: Large ribosomal subunit protein bL9m (265 aa).

The N-terminal 49 residues, 1–49, are a transit peptide targeting the mitochondrion; the sequence is MAASVAPGVRTLWWAGAAWLRQGGIRELFRPRIEGSTPGRDFSLSHYQS.

The protein belongs to the bacterial ribosomal protein bL9 family. Component of the mitochondrial ribosome large subunit (39S) which comprises a 16S rRNA and about 50 distinct proteins.

Its subcellular location is the mitochondrion. In Mus musculus (Mouse), this protein is Large ribosomal subunit protein bL9m (Mrpl9).